The sequence spans 390 residues: Peroxisomal sarcosine oxidase (390 aa).

9-39 (DAIVIGAGIQGCFTAYHLAKHRKRILLLEQF) contributes to the FAD binding site. N6-acetyllysine is present on Lys-126. Cys-319 carries the S-8alpha-FAD cysteine modification. A Microbody targeting signal motif is present at residues 388–390 (AHL).

The protein belongs to the MSOX/MTOX family. The cofactor is FAD. In terms of tissue distribution, expressed in the liver and kidney.

The protein resides in the peroxisome. The enzyme catalyses sarcosine + O2 + H2O = formaldehyde + glycine + H2O2. It catalyses the reaction L-pipecolate + O2 = L-1-piperideine-6-carboxylate + H2O2 + H(+). Its function is as follows. Metabolizes sarcosine and L-pipecolic acid. This Homo sapiens (Human) protein is Peroxisomal sarcosine oxidase (PIPOX).